The sequence spans 84 residues: ATP synthase subunit c (84 aa).

A run of 2 helical transmembrane segments spans residues 9-29 (LGLAIFGCAIGMALAALGCGI) and 57-77 (ILGLAFIESLAIYALVINLII).

This sequence belongs to the ATPase C chain family. F-type ATPases have 2 components, F(1) - the catalytic core - and F(0) - the membrane proton channel. F(1) has five subunits: alpha(3), beta(3), gamma(1), delta(1), epsilon(1). F(0) has three main subunits: a(1), b(2) and c(10-14). The alpha and beta chains form an alternating ring which encloses part of the gamma chain. F(1) is attached to F(0) by a central stalk formed by the gamma and epsilon chains, while a peripheral stalk is formed by the delta and b chains.

The protein localises to the cell membrane. Functionally, f(1)F(0) ATP synthase produces ATP from ADP in the presence of a proton or sodium gradient. F-type ATPases consist of two structural domains, F(1) containing the extramembraneous catalytic core and F(0) containing the membrane proton channel, linked together by a central stalk and a peripheral stalk. During catalysis, ATP synthesis in the catalytic domain of F(1) is coupled via a rotary mechanism of the central stalk subunits to proton translocation. Its function is as follows. Key component of the F(0) channel; it plays a direct role in translocation across the membrane. A homomeric c-ring of between 10-14 subunits forms the central stalk rotor element with the F(1) delta and epsilon subunits. The protein is ATP synthase subunit c of Lawsonia intracellularis (strain PHE/MN1-00).